The primary structure comprises 568 residues: Zinc finger protein 648 (568 aa).

Residues 1 to 11 (MAQVDSQDRWG) show a composition bias toward basic and acidic residues. The interval 1 to 106 (MAQVDSQDRW…MSGKASWSRD (106 aa)) is disordered. 10 C2H2-type zinc fingers span residues 279 to 301 (YACE…RRLH), 307 to 329 (YQCS…IRTH), 335 to 358 (YPCP…RNMH), 364 to 386 (FPCS…QRTH), 392 to 414 (FRCP…QRVH), 420 to 442 (FPCP…QTLH), 448 to 470 (FKCA…QRIH), 476 to 498 (FPCT…QQIH), 504 to 526 (FLCA…IRMH), and 532 to 554 (YQCE…RAKH). The tract at residues 548 to 568 (QRHRAKHGTCKKEPIPSSSDE) is disordered.

The protein belongs to the krueppel C2H2-type zinc-finger protein family.

Its subcellular location is the nucleus. In terms of biological role, may be involved in transcriptional regulation. The polypeptide is Zinc finger protein 648 (ZNF648) (Homo sapiens (Human)).